Consider the following 129-residue polypeptide: Succinate dehydrogenase subunit 3-1, mitochondrial (129 aa).

Residues 1–58 (MEKYHSNSRFAPFRDAPFALRGALGSSGSSFSSIDSLRRSSTLEQARGYTSRPLGAVR) constitute a mitochondrion transit peptide. A compositionally biased stretch (low complexity) spans 25–35 (GSSGSSFSSID). Residues 25 to 80 (GSSGSSFSSIDSLRRSSTLEQARGYTSRPLGAVRPKMLPSGCRPLHTSHPLSAPVA) form a disordered region. Histidine 87 is a heme binding site. Residues 105 to 127 (IFGAALGAAIISIPLATKFSLMF) traverse the membrane as a helical segment.

Component of complex II composed of eight subunits in plants: four classical SDH subunits SDH1, SDH2, SDH3 and SDH4 (a flavoprotein (FP), an iron-sulfur protein (IP), and a cytochrome b composed of a large and a small subunit.), as well as four subunits unknown in mitochondria from bacteria and heterotrophic eukaryotes. The cofactor is heme.

It localises to the mitochondrion inner membrane. It functions in the pathway carbohydrate metabolism; tricarboxylic acid cycle. Membrane-anchoring subunit of succinate dehydrogenase (SDH). This Oryza sativa subsp. japonica (Rice) protein is Succinate dehydrogenase subunit 3-1, mitochondrial.